A 466-amino-acid polypeptide reads, in one-letter code: Soluble pyridine nucleotide transhydrogenase (466 aa).

36–45 contacts FAD; it reads ERYHNVGGGC.

This sequence belongs to the class-I pyridine nucleotide-disulfide oxidoreductase family. FAD is required as a cofactor.

It is found in the cytoplasm. It carries out the reaction NAD(+) + NADPH = NADH + NADP(+). Functionally, conversion of NADPH, generated by peripheral catabolic pathways, to NADH, which can enter the respiratory chain for energy generation. The sequence is that of Soluble pyridine nucleotide transhydrogenase from Salmonella paratyphi A (strain ATCC 9150 / SARB42).